Here is a 142-residue protein sequence, read N- to C-terminus: Mediator of RNA polymerase II transcription subunit 9 (142 aa).

The tract at residues 1–58 (MASSGVAGGRQAEDTLQPPPELLPESKPPPPPQPLPVAALPPPAAPRPQSPAGAKEEN) is disordered. At alanine 2 the chain carries N-acetylalanine. Over residues 17–49 (QPPPELLPESKPPPPPQPLPVAALPPPAAPRPQ) the composition is skewed to pro residues. Residues 78-134 (DLHQDLNALKTKFQELRKLIGTMPGIHVSPEQQQQQLHSLREQVRTKNELLQKYKSL) adopt a coiled-coil conformation. Residue serine 106 is modified to Phosphoserine.

This sequence belongs to the Mediator complex subunit 9 family. In terms of assembly, component of the Mediator complex, which is composed of MED1, MED4, MED6, MED7, MED8, MED9, MED10, MED11, MED12, MED13, MED13L, MED14, MED15, MED16, MED17, MED18, MED19, MED20, MED21, MED22, MED23, MED24, MED25, MED26, MED27, MED29, MED30, MED31, CCNC, CDK8 and CDC2L6/CDK11. The MED12, MED13, CCNC and CDK8 subunits form a distinct module termed the CDK8 module. Mediator containing the CDK8 module is less active than Mediator lacking this module in supporting transcriptional activation. Individual preparations of the Mediator complex lacking one or more distinct subunits have been variously termed ARC, CRSP, DRIP, PC2, SMCC and TRAP.

Its subcellular location is the nucleus. Component of the Mediator complex, a coactivator involved in the regulated transcription of nearly all RNA polymerase II-dependent genes. Mediator functions as a bridge to convey information from gene-specific regulatory proteins to the basal RNA polymerase II transcription machinery. Mediator is recruited to promoters by direct interactions with regulatory proteins and serves as a scaffold for the assembly of a functional preinitiation complex with RNA polymerase II and the general transcription factors. The protein is Mediator of RNA polymerase II transcription subunit 9 (Med9) of Mus musculus (Mouse).